Reading from the N-terminus, the 467-residue chain is Zinc finger protein mex-6 (467 aa).

Composition is skewed to low complexity over residues 1-22 (MTAT…ATAQ) and 179-195 (STTR…LPTS). 2 disordered regions span residues 1–35 (MTAT…QQHP) and 163–209 (TNPQ…NRNS). Thr190 bears the Phosphothreonine mark. Residues 196-207 (REYETVQRDRNR) show a composition bias toward basic and acidic residues. 2 C3H1-type zinc fingers span residues 273 to 302 (NFKT…HGLK) and 317 to 347 (KYKT…HPSD). Residues 425–451 (INENDLPPHLRRIRRGNPPVTRSRPSF) form a disordered region. Ser457 carries the phosphoserine modification.

Interacts (probably when phosphorylated on Thr-190) with plk-1 (via POLO box domain) and plk-2 (via POLO box domain). In terms of processing, phosphorylation on Ser-457 by par-1 promotes localization of the protein to the anterior cytoplasm of the zygote.

It localises to the cytoplasm. Functionally, functions with mex-5 to affect embryonic viability, establish soma germline asymmetry in embryos and establish plk-1, pie-1, mex-1, and pos-1 asymmetry in embryos. Also affects formation of intestinal cells. The polypeptide is Zinc finger protein mex-6 (mex-6) (Caenorhabditis elegans).